We begin with the raw amino-acid sequence, 421 residues long: MHDAVTRPTPPADATAWPRRITQAVKIGSVTVGGGHPVVVQSMTNTDTADIAGSVKQVADLWRAGSEMVRLTVNNAESAAAIPRIVDKLRMMGIEVPLIGDFHYNGHQLLAAEPACAEALAKYRINPGNVGFGKKKDLQFGQLIEFAIKYGKPVRIGANWGSLDQSLAAQLMDENSQRDTPWDAGRVLREALIRSAVDSAERAVELGLPRERIILSAKVSGVQELIAVYRDMASRCDFALHLGLTEAGIGSKGIVASAAALSVLLQEGIGDTIRISLTPEPGQSRTQEVVVAQELLQTTGQRAFTPMVTACPGCGRTTSEFFQELAGVVQNHVRAKMPEWKITNPGAENMTLAVMGCVVNGPGESRHANIGISLPGTGEAPSAPVFIDGEKSVTLRGENIAYEFIELIDQYVERTYVRRAG.

C311, C314, C357, and E364 together coordinate [4Fe-4S] cluster.

This sequence belongs to the IspG family. The cofactor is [4Fe-4S] cluster.

It carries out the reaction (2E)-4-hydroxy-3-methylbut-2-enyl diphosphate + oxidized [flavodoxin] + H2O + 2 H(+) = 2-C-methyl-D-erythritol 2,4-cyclic diphosphate + reduced [flavodoxin]. The protein operates within isoprenoid biosynthesis; isopentenyl diphosphate biosynthesis via DXP pathway; isopentenyl diphosphate from 1-deoxy-D-xylulose 5-phosphate: step 5/6. Its function is as follows. Converts 2C-methyl-D-erythritol 2,4-cyclodiphosphate (ME-2,4cPP) into 1-hydroxy-2-methyl-2-(E)-butenyl 4-diphosphate. This is 4-hydroxy-3-methylbut-2-en-1-yl diphosphate synthase (flavodoxin) from Xanthomonas euvesicatoria pv. vesicatoria (strain 85-10) (Xanthomonas campestris pv. vesicatoria).